The primary structure comprises 531 residues: Chaperonin GroEL, chloroplastic (531 aa).

Residues Thr30–Pro33, Asp87–Thr91, Gly415, Asn481–Ala483, and Asp497 each bind ATP.

Belongs to the chaperonin (HSP60) family. As to quaternary structure, forms a cylinder of 14 subunits composed of two heptameric rings stacked back-to-back. Interacts with the co-chaperonin GroES.

It localises to the plastid. The protein resides in the chloroplast. The catalysed reaction is ATP + H2O + a folded polypeptide = ADP + phosphate + an unfolded polypeptide.. Functionally, together with its co-chaperonin GroES, plays an essential role in assisting protein folding. The GroEL-GroES system forms a nano-cage that allows encapsulation of the non-native substrate proteins and provides a physical environment optimized to promote and accelerate protein folding. The protein is Chaperonin GroEL, chloroplastic of Emiliania huxleyi (Coccolithophore).